The chain runs to 715 residues: uncharacterized protein (715 aa).

4 disordered regions span residues 192–216 (ASSV…SVTA), 300–348 (NEEV…TSKR), 461–481 (ASSS…RSNE), and 580–630 (FTVS…KPPK). Residues 202–213 (NNTSPYPPSNSS) show a composition bias toward low complexity. 2 stretches are compositionally biased toward polar residues: residues 301–326 (EEVS…NKND) and 472–481 (HLGTSLRSNE). The span at 601–614 (TDSSPSDTISSSPT) shows a compositional bias: low complexity.

This is an uncharacterized protein from Schizosaccharomyces pombe (strain 972 / ATCC 24843) (Fission yeast).